The primary structure comprises 20 residues: Brevinin-1ITb (20 aa).

Methionine sulfoxide; partial is present on M8. Cysteines 14 and 20 form a disulfide.

This sequence belongs to the frog skin active peptide (FSAP) family. Brevinin subfamily. As to expression, expressed by the skin glands.

The protein localises to the secreted. Its function is as follows. Antimicrobial peptide. In Rana italica (Italian stream frog), this protein is Brevinin-1ITb.